The following is a 441-amino-acid chain: Putative cytochrome P450 138 (441 aa).

Cys-388 is a heme binding site.

It belongs to the cytochrome P450 family. Requires heme as cofactor.

The protein is Putative cytochrome P450 138 (cyp138) of Mycobacterium bovis (strain ATCC BAA-935 / AF2122/97).